A 238-amino-acid chain; its full sequence is Ephrin-A3 (238 aa).

Residues Met1–Ala22 form the signal peptide. The region spanning Gly30 to Ser169 is the Ephrin RBD domain. Asn38, Asn67, and Asn100 each carry an N-linked (GlcNAc...) asparagine glycan. Disulfide bonds link Cys63-Cys110 and Cys99-Cys158. A lipid anchor (GPI-anchor amidated glycine) is attached at Gly214. The propeptide at Thr215–Ser238 is removed in mature form.

Belongs to the ephrin family. Interacts with EPHA8; activates EPHA8. As to expression, expressed in brain, skeletal muscle, spleen, thymus, prostate, testis, ovary, small intestine, and peripheral blood leukocytes.

It is found in the cell membrane. Cell surface GPI-bound ligand for Eph receptors, a family of receptor tyrosine kinases which are crucial for migration, repulsion and adhesion during neuronal, vascular and epithelial development. Binds promiscuously Eph receptors residing on adjacent cells, leading to contact-dependent bidirectional signaling into neighboring cells. The signaling pathway downstream of the receptor is referred to as forward signaling while the signaling pathway downstream of the ephrin ligand is referred to as reverse signaling. In Homo sapiens (Human), this protein is Ephrin-A3 (EFNA3).